The chain runs to 374 residues: Pectate lyase 1 (374 aa).

The N-terminal stretch at 1-21 is a signal peptide; the sequence is MDSPCLVALLVFSFVIGSCFS. 2 disulfide bridges follow: Cys28/Cys45 and Cys128/Cys147. Asn158 carries an N-linked (GlcNAc...) asparagine glycan. Asp170 contributes to the Ca(2+) binding site. The N-linked (GlcNAc...) (complex) asparagine glycan is linked to Asn191. Positions 194 and 198 each coordinate Ca(2+). Residue Arg250 is part of the active site. Asn293 carries N-linked (GlcNAc...) asparagine glycosylation. Cys306 and Cys312 are joined by a disulfide. N-linked (GlcNAc...) (complex) asparagine glycosylation occurs at Asn354.

It belongs to the polysaccharide lyase 1 family. Amb a subfamily. It depends on Ca(2+) as a cofactor. Post-translationally, N-glycosylated; contains fucose and xylose.

It carries out the reaction Eliminative cleavage of (1-&gt;4)-alpha-D-galacturonan to give oligosaccharides with 4-deoxy-alpha-D-galact-4-enuronosyl groups at their non-reducing ends.. It functions in the pathway glycan metabolism; pectin degradation; 2-dehydro-3-deoxy-D-gluconate from pectin: step 2/5. Has pectate lyase activity. In Cryptomeria japonica (Japanese cedar), this protein is Pectate lyase 1.